A 352-amino-acid chain; its full sequence is Protein CIA1 (352 aa).

WD repeat units follow at residues 18–64 (GHTD…RSWT), 72–111 (THTR…FECI), 116–155 (GHEN…EYDC), 161–200 (GHTQ…GEYQ), 211–250 (GHSS…MQSG), 265–303 (YHDR…SVDG), and 315–352 (AHEN…ATKP).

The protein belongs to the WD repeat CIA1 family. In terms of assembly, part of a complex composed of AE7, CIA1, MMS19 and NAR1. Interacts with AE7 and NAR1.

It is found in the nucleus. The protein resides in the cytoplasm. Its function is as follows. Essential component of the cytosolic iron-sulfur (Fe-S) protein assembly (CIA) machinery. Required for the maturation of extramitochondrial Fe/S proteins. The sequence is that of Protein CIA1 from Arabidopsis thaliana (Mouse-ear cress).